Here is a 250-residue protein sequence, read N- to C-terminus: Small ribosomal subunit protein uS3 (250 aa).

The KH type-2 domain occupies 16 to 85 (IDEYLEKELE…NPQIEVKEVS (70 aa)).

This sequence belongs to the universal ribosomal protein uS3 family. Part of the 30S ribosomal subunit.

Binds the lower part of the 30S subunit head. The protein is Small ribosomal subunit protein uS3 of Methanobrevibacter smithii (strain ATCC 35061 / DSM 861 / OCM 144 / PS).